The chain runs to 482 residues: Catalase (482 aa).

Polar residues predominate over residues 1–23 (MSQNKTLTTASGPPVADNQNSRS). The tract at residues 1 to 28 (MSQNKTLTTASGPPVADNQNSRSAGPRG) is disordered. Active-site residues include H55 and N128. Y338 contacts heme. Positions 370–395 (SMAFGSNGGAAPNYEPNSYADAPKQA) are disordered.

This sequence belongs to the catalase family. The cofactor is heme.

It catalyses the reaction 2 H2O2 = O2 + 2 H2O. In terms of biological role, decomposes hydrogen peroxide into water and oxygen; serves to protect cells from the toxic effects of hydrogen peroxide. The polypeptide is Catalase (cat) (Onchocerca volvulus endobacterium).